Consider the following 197-residue polypeptide: Imidazoleglycerol-phosphate dehydratase (197 aa).

The protein belongs to the imidazoleglycerol-phosphate dehydratase family.

The protein resides in the cytoplasm. It catalyses the reaction D-erythro-1-(imidazol-4-yl)glycerol 3-phosphate = 3-(imidazol-4-yl)-2-oxopropyl phosphate + H2O. It functions in the pathway amino-acid biosynthesis; L-histidine biosynthesis; L-histidine from 5-phospho-alpha-D-ribose 1-diphosphate: step 6/9. The polypeptide is Imidazoleglycerol-phosphate dehydratase (Thioalkalivibrio sulfidiphilus (strain HL-EbGR7)).